Here is a 307-residue protein sequence, read N- to C-terminus: MTDSTYDVARVRTYLQDLQTRIADALGALDGTPLATDAWQRGPAERLRGGGCTRILEGGRVFERAGIGFSDVAGDALPPSASAARPQLAGRGFEALGVSLVLHPRNPYCPTVHMNVRMLIATKPGEEPVFWFGGGMDLTPVYGFEDDARHFHQTCKDALDPFGVELYPRFKKWCDEYFFLKHRNEMRGIGGIFFDDFSEPGFERSFDMMQSVGDAFLQAYLPIVERRAELPYGERERDFQAYRRGRYVEFNLVFDRGTLFGLQSGGRTESILMSMPPVANWRYNWQPEPGSPEARLYSDFIVPRDWI.

A substrate-binding site is contributed by serine 99. Positions 103 and 113 each coordinate a divalent metal cation. The Proton donor role is filled by histidine 113. 115–117 (NVR) is a substrate binding site. A divalent metal cation is bound by residues histidine 152 and histidine 182. Residues 247 to 282 (YVEFNLVFDRGTLFGLQSGGRTESILMSMPPVANWR) form an important for dimerization region. 265 to 267 (GGR) lines the substrate pocket.

The protein belongs to the aerobic coproporphyrinogen-III oxidase family. In terms of assembly, homodimer. It depends on a divalent metal cation as a cofactor.

It localises to the cytoplasm. It carries out the reaction coproporphyrinogen III + O2 + 2 H(+) = protoporphyrinogen IX + 2 CO2 + 2 H2O. Its pathway is porphyrin-containing compound metabolism; protoporphyrin-IX biosynthesis; protoporphyrinogen-IX from coproporphyrinogen-III (O2 route): step 1/1. In terms of biological role, involved in the heme biosynthesis. Catalyzes the aerobic oxidative decarboxylation of propionate groups of rings A and B of coproporphyrinogen-III to yield the vinyl groups in protoporphyrinogen-IX. The polypeptide is Oxygen-dependent coproporphyrinogen-III oxidase (Burkholderia lata (strain ATCC 17760 / DSM 23089 / LMG 22485 / NCIMB 9086 / R18194 / 383)).